The chain runs to 97 residues: Large ribosomal subunit protein bL28 (97 aa).

It belongs to the bacterial ribosomal protein bL28 family.

In Rickettsia typhi (strain ATCC VR-144 / Wilmington), this protein is Large ribosomal subunit protein bL28.